Consider the following 227-residue polypeptide: Cytochrome c oxidase subunit 2 (227 aa).

Over 1 to 14 (MAYPFQLGLQDASS) the chain is Mitochondrial intermembrane. Residues 15–45 (PIMEELTNFHDHTLMIVFLISSLVLYIISSM) traverse the membrane as a helical segment. At 46-59 (LTTKMTHTSTMDAQ) the chain is on the mitochondrial matrix side. A helical transmembrane segment spans residues 60–87 (EVETIWTVLPAVILILIALPSLRILYMM). Topologically, residues 88 to 227 (DEINNPVLTV…HFENWSTSMI (140 aa)) are mitochondrial intermembrane. Cu cation-binding residues include His-161, Cys-196, Glu-198, Cys-200, His-204, and Met-207. Glu-198 is a Mg(2+) binding site.

The protein belongs to the cytochrome c oxidase subunit 2 family. In terms of assembly, component of the cytochrome c oxidase (complex IV, CIV), a multisubunit enzyme composed of 14 subunits. The complex is composed of a catalytic core of 3 subunits MT-CO1, MT-CO2 and MT-CO3, encoded in the mitochondrial DNA, and 11 supernumerary subunits COX4I, COX5A, COX5B, COX6A, COX6B, COX6C, COX7A, COX7B, COX7C, COX8 and NDUFA4, which are encoded in the nuclear genome. The complex exists as a monomer or a dimer and forms supercomplexes (SCs) in the inner mitochondrial membrane with NADH-ubiquinone oxidoreductase (complex I, CI) and ubiquinol-cytochrome c oxidoreductase (cytochrome b-c1 complex, complex III, CIII), resulting in different assemblies (supercomplex SCI(1)III(2)IV(1) and megacomplex MCI(2)III(2)IV(2)). Found in a complex with TMEM177, COA6, COX18, COX20, SCO1 and SCO2. Interacts with TMEM177 in a COX20-dependent manner. Interacts with COX20. Interacts with COX16. Cu cation serves as cofactor.

The protein localises to the mitochondrion inner membrane. It catalyses the reaction 4 Fe(II)-[cytochrome c] + O2 + 8 H(+)(in) = 4 Fe(III)-[cytochrome c] + 2 H2O + 4 H(+)(out). Component of the cytochrome c oxidase, the last enzyme in the mitochondrial electron transport chain which drives oxidative phosphorylation. The respiratory chain contains 3 multisubunit complexes succinate dehydrogenase (complex II, CII), ubiquinol-cytochrome c oxidoreductase (cytochrome b-c1 complex, complex III, CIII) and cytochrome c oxidase (complex IV, CIV), that cooperate to transfer electrons derived from NADH and succinate to molecular oxygen, creating an electrochemical gradient over the inner membrane that drives transmembrane transport and the ATP synthase. Cytochrome c oxidase is the component of the respiratory chain that catalyzes the reduction of oxygen to water. Electrons originating from reduced cytochrome c in the intermembrane space (IMS) are transferred via the dinuclear copper A center (CU(A)) of subunit 2 and heme A of subunit 1 to the active site in subunit 1, a binuclear center (BNC) formed by heme A3 and copper B (CU(B)). The BNC reduces molecular oxygen to 2 water molecules using 4 electrons from cytochrome c in the IMS and 4 protons from the mitochondrial matrix. This chain is Cytochrome c oxidase subunit 2 (MT-CO2), found in Lophuromys flavopunctatus (Yellow-spotted brush-furred rat).